The following is a 3640-amino-acid chain: Serine/threonine-protein kinase SMG1 (3640 aa).

The span at 21–34 (NDWQPRSDSLSASQ) shows a compositional bias: polar residues. Positions 21 to 41 (NDWQPRSDSLSASQDGVKCSV) are disordered. In terms of domain architecture, FAT spans 1495-1843 (YCHSGKCELA…LYPAIVGSIS (349 aa)). Residues 1794–1829 (APWRGIIPQLFSRLNHPEAYIRQSICSLLCRVAQDS) form an HEAT repeat. Positions 1870 to 1890 (GLCGGESETGSGPTSQESSRG) are disordered. Low complexity predominate over residues 1874-1887 (GESETGSGPTSQES). In terms of domain architecture, PI3K/PI4K catalytic spans 2102 to 2441 (VGNTITILPT…MERDITRSLF (340 aa)). The segment at 2108 to 2114 (ILPTKTK) is G-loop. Residues 2310 to 2318 (GLGDRHLDN) are catalytic loop. An activation loop region spans residues 2330–2354 (HIDYNVCFEKGKSLRVPEKVPFRMT). The 33-residue stretch at 3608-3640 (RRMSVTEQVDYVIKEATNVDNLAQLYEGWTAWV) folds into the FATC domain.

The protein belongs to the PI3/PI4-kinase family. Mn(2+) is required as a cofactor. Post-translationally, autophosphorylated.

It is found in the nucleus. It localises to the cytoplasm. It carries out the reaction L-seryl-[protein] + ATP = O-phospho-L-seryl-[protein] + ADP + H(+). The catalysed reaction is L-threonyl-[protein] + ATP = O-phospho-L-threonyl-[protein] + ADP + H(+). Serine/threonine protein kinase involved in both mRNA surveillance and genotoxic stress response pathways. Recognizes the substrate consensus sequence [ST]-Q. Plays a central role in nonsense-mediated decay (NMD) of mRNAs containing premature stop codons by phosphorylating UPF1/RENT1. The sequence is that of Serine/threonine-protein kinase SMG1 from Danio rerio (Zebrafish).